A 71-amino-acid chain; its full sequence is MKANIHPDYTDLKVTCSCGNAFTTKSTMSKDAFHIEVCSECHPFYTGKQKVVDTAGRIDKFKQKFGKFSRG.

Positions 16, 18, 38, and 41 each coordinate Zn(2+).

Belongs to the bacterial ribosomal protein bL31 family. Type A subfamily. Part of the 50S ribosomal subunit. It depends on Zn(2+) as a cofactor.

Binds the 23S rRNA. The protein is Large ribosomal subunit protein bL31 of Laribacter hongkongensis (strain HLHK9).